The primary structure comprises 107 residues: Phosphoribosyl-ATP pyrophosphatase (107 aa).

The protein belongs to the PRA-PH family.

It is found in the cytoplasm. It catalyses the reaction 1-(5-phospho-beta-D-ribosyl)-ATP + H2O = 1-(5-phospho-beta-D-ribosyl)-5'-AMP + diphosphate + H(+). Its pathway is amino-acid biosynthesis; L-histidine biosynthesis; L-histidine from 5-phospho-alpha-D-ribose 1-diphosphate: step 2/9. This is Phosphoribosyl-ATP pyrophosphatase (hisE) from Agrobacterium fabrum (strain C58 / ATCC 33970) (Agrobacterium tumefaciens (strain C58)).